Consider the following 164-residue polypeptide: MEQFLKIGLIINTHGLKGELKVNPQTDNIDRFKKLKRVYIAGEEKQVEGCKFLNDKVVLKIQGIDGIEIANKYRNKYIEVKREDAVELPEGRYYVADIIGCKVLDEDGNYLGKVKEVIHTKNNDVYWVEGKKELLIPVLKTIVVKIDIENEEIIIKPVKTWLLE.

The PRC barrel domain maps to glutamate 90–tryptophan 161.

The protein belongs to the RimM family. As to quaternary structure, binds ribosomal protein uS19.

It is found in the cytoplasm. Functionally, an accessory protein needed during the final step in the assembly of 30S ribosomal subunit, possibly for assembly of the head region. Essential for efficient processing of 16S rRNA. May be needed both before and after RbfA during the maturation of 16S rRNA. It has affinity for free ribosomal 30S subunits but not for 70S ribosomes. This Clostridium tetani (strain Massachusetts / E88) protein is Ribosome maturation factor RimM.